The primary structure comprises 277 residues: Deoxyguanosine kinase, mitochondrial (277 aa).

The N-terminal 39 residues, 1–39 (MAAGRFLLRRLRASFRSPLRNALVDAPHARAMHDGGGPR), are a transit peptide targeting the mitochondrion. Residue 45–53 (GNIAVGKST) participates in ATP binding. Residues Glu70, Tyr100, Gln111, and Arg118 each contribute to the substrate site. Glu141 acts as the Proton acceptor in catalysis. Residues Arg142 and Asp147 each coordinate substrate. ATP is bound at residue 206–208 (RDR). Substrate is bound at residue Glu211. An ATP-binding site is contributed by 254-256 (EDF).

The protein belongs to the DCK/DGK family. Homodimer. In terms of tissue distribution, spleen and thymus. Expressed at much lower levels in the brain and liver.

It localises to the mitochondrion. It is found in the cytoplasm. It carries out the reaction 2'-deoxyguanosine + ATP = dGMP + ADP + H(+). It catalyses the reaction 2'-deoxyadenosine + ATP = dAMP + ADP + H(+). Phosphorylates deoxyguanosine and deoxyadenosine in the mitochondrial matrix, with the highest efficiency for deoxyguanosine. In non-replicating cells, where cytosolic dNTP synthesis is down-regulated, mtDNA synthesis depends solely on DGUOK and TK2. Phosphorylates certain nucleoside analogs. Widely used as target of antiviral and chemotherapeutic agents. The sequence is that of Deoxyguanosine kinase, mitochondrial (Dguok) from Mus musculus (Mouse).